The primary structure comprises 238 residues: SPEG neighbor protein (238 aa).

In terms of domain architecture, IQ spans 29-55 (QSAAIRIQASYRGHRSRKELREKGPPR). 2 consecutive Ig-like domains span residues 54-143 (PRVL…ARIL) and 147-236 (PTKI…ARVD).

This Homo sapiens (Human) protein is SPEG neighbor protein.